Consider the following 587-residue polypeptide: Heavy metal-associated isoprenylated plant protein 33 (587 aa).

An HMA domain is found at 9–72 (IQTCVLKVNI…KLLKSGKHAE (64 aa)). The a metal cation site is built by C20 and C23. Disordered stretches follow at residues 98–146 (QIDH…MVIP), 176–261 (LKLP…KPMM), 287–449 (AHKN…PMSN), 462–504 (PGGG…QQQQ), and 532–587 (YARP…CNIM). 2 stretches are compositionally biased toward gly residues: residues 104–113 (KGGGGGGGGP) and 121–140 (KIGGGGGGGGGGGGGGGGGP). Residues 194–208 (PMNKNPQMPNNPNQK) are compositionally biased toward low complexity. Over residues 215–248 (PDDDDEEDFSDEFDDEFDEDDDEFDDDLEDDEFD) the composition is skewed to acidic residues. Gly residues-rich tracts occupy residues 290 to 300 (NGGGPGPAGGK), 312 to 419 (MGGG…GGGP), and 428 to 445 (GAMGGPMGSLPQMGGGPG). Residues 471–483 (SAEAPPGYFQGQV) are compositionally biased toward low complexity. Pro residues-rich tracts occupy residues 534 to 547 (RPPPAVNYMPPQPQ) and 554 to 565 (YPYPYPYPPQYP). Residues 578–587 (DENTSSCNIM) show a composition bias toward polar residues. Residue C584 is modified to Cysteine methyl ester. C584 is lipidated: S-farnesyl cysteine. Residues 585–587 (NIM) constitute a propeptide, removed in mature form.

It belongs to the HIPP family.

Heavy-metal-binding protein. This is Heavy metal-associated isoprenylated plant protein 33 from Arabidopsis thaliana (Mouse-ear cress).